The chain runs to 469 residues: Cysteine--tRNA ligase (469 aa).

C33 is a Zn(2+) binding site. The short motif at 35 to 45 (PTVYNLLHIGN) is the 'HIGH' region element. Zn(2+)-binding residues include C214, H239, and E243. Positions 271–275 (KMSKS) match the 'KMSKS' region motif. K274 is an ATP binding site.

Belongs to the class-I aminoacyl-tRNA synthetase family. As to quaternary structure, monomer. The cofactor is Zn(2+).

The protein resides in the cytoplasm. It catalyses the reaction tRNA(Cys) + L-cysteine + ATP = L-cysteinyl-tRNA(Cys) + AMP + diphosphate. This Petrotoga mobilis (strain DSM 10674 / SJ95) protein is Cysteine--tRNA ligase.